A 657-amino-acid polypeptide reads, in one-letter code: UvrABC system protein B (657 aa).

In terms of domain architecture, Helicase ATP-binding spans 25-182 (KSIKQGNEFQ…KKLIEIQYER (158 aa)). 38 to 45 (GVTGSGKT) is a binding site for ATP. Residues 91–114 (YYDYYQPEAYVPQTDTFIEKDASI) carry the Beta-hairpin motif. The 167-residue stretch at 429 to 595 (QIDDLYTEIQ…TINKEVRELI (167 aa)) folds into the Helicase C-terminal domain. Residues 621–656 (KKLIKEYTDEMKLAAKNLQFERAAQLRDKIEELKGK) enclose the UVR domain.

Belongs to the UvrB family. As to quaternary structure, forms a heterotetramer with UvrA during the search for lesions. Interacts with UvrC in an incision complex.

Its subcellular location is the cytoplasm. Functionally, the UvrABC repair system catalyzes the recognition and processing of DNA lesions. A damage recognition complex composed of 2 UvrA and 2 UvrB subunits scans DNA for abnormalities. Upon binding of the UvrA(2)B(2) complex to a putative damaged site, the DNA wraps around one UvrB monomer. DNA wrap is dependent on ATP binding by UvrB and probably causes local melting of the DNA helix, facilitating insertion of UvrB beta-hairpin between the DNA strands. Then UvrB probes one DNA strand for the presence of a lesion. If a lesion is found the UvrA subunits dissociate and the UvrB-DNA preincision complex is formed. This complex is subsequently bound by UvrC and the second UvrB is released. If no lesion is found, the DNA wraps around the other UvrB subunit that will check the other stand for damage. The sequence is that of UvrABC system protein B from Clostridium botulinum (strain Eklund 17B / Type B).